The sequence spans 534 residues: Phosphoenolpyruvate carboxykinase (ATP) (534 aa).

Positions 58, 194, and 200 each coordinate substrate. ATP-binding positions include Lys-200, His-219, and 235 to 243 (GLSGTGKTT). Positions 200 and 219 each coordinate Mn(2+). Asp-256 contacts Mn(2+). Residues Glu-284, Arg-322, and Thr-449 each contribute to the ATP site. Arg-322 lines the substrate pocket.

This sequence belongs to the phosphoenolpyruvate carboxykinase (ATP) family. The cofactor is Mn(2+).

Its subcellular location is the cytoplasm. It carries out the reaction oxaloacetate + ATP = phosphoenolpyruvate + ADP + CO2. Its pathway is carbohydrate biosynthesis; gluconeogenesis. Involved in the gluconeogenesis. Catalyzes the conversion of oxaloacetate (OAA) to phosphoenolpyruvate (PEP) through direct phosphoryl transfer between the nucleoside triphosphate and OAA. In Novosphingobium aromaticivorans (strain ATCC 700278 / DSM 12444 / CCUG 56034 / CIP 105152 / NBRC 16084 / F199), this protein is Phosphoenolpyruvate carboxykinase (ATP).